A 336-amino-acid polypeptide reads, in one-letter code: Transcription initiation factor IIB (336 aa).

The TFIIB-type zinc finger occupies 41–72; it reads QKLRCPICGNTVFIEDAERGQIVCASCGYVLM. Zn(2+) is bound by residues Cys45, Cys48, Cys64, and Cys67. 2 repeat units span residues 152 to 235 and 246 to 327.

This sequence belongs to the TFIIB family.

Stabilizes TBP binding to an archaeal box-A promoter. Also responsible for recruiting RNA polymerase II to the pre-initiation complex (DNA-TBP-TFIIB). In Caldivirga maquilingensis (strain ATCC 700844 / DSM 13496 / JCM 10307 / IC-167), this protein is Transcription initiation factor IIB.